A 112-amino-acid chain; its full sequence is Large ribosomal subunit protein bL17 (112 aa).

Belongs to the bacterial ribosomal protein bL17 family. Part of the 50S ribosomal subunit. Contacts protein L32.

The protein is Large ribosomal subunit protein bL17 of Desulfitobacterium hafniense (strain DSM 10664 / DCB-2).